The primary structure comprises 592 residues: Thiol:disulfide interchange protein DsbD (592 aa).

An N-terminal signal peptide occupies residues 1–19 (MKLIASFSIFMLMSIWSFA). Cystine bridges form between C130–C136 and C204–C326. The next 8 helical transmembrane spans lie at 186–206 (IWVLLIFLALGVGLAFTPCVF), 229–249 (FVLSFVYVQGMALTYSLLGLV), 265–285 (IILGALIVVFALLALVMFGAW), 318–338 (ISGLVASPCTTAPLTGILLYI), 345–365 (LLGFSALYALSLGMGIPLILF), 379–399 (WMNIIKVTFGFMMLAVALMFV), 406–426 (MATDILWSLLGLVTFSYFYVM), and 440–460 (ALVIFIGLFASAMYGYQTIFG). The Thioredoxin domain maps to 443 to 592 (IFIGLFASAM…AFAAHAKNIL (150 aa)). C508 and C511 form a disulfide bridge.

It belongs to the thioredoxin family. DsbD subfamily.

The protein resides in the cell inner membrane. It catalyses the reaction [protein]-dithiol + NAD(+) = [protein]-disulfide + NADH + H(+). The enzyme catalyses [protein]-dithiol + NADP(+) = [protein]-disulfide + NADPH + H(+). Required to facilitate the formation of correct disulfide bonds in some periplasmic proteins and for the assembly of the periplasmic c-type cytochromes. Acts by transferring electrons from cytoplasmic thioredoxin to the periplasm. This transfer involves a cascade of disulfide bond formation and reduction steps. This is Thiol:disulfide interchange protein DsbD from Pseudoalteromonas atlantica (strain T6c / ATCC BAA-1087).